The primary structure comprises 250 residues: Cell division protein FtsQ (250 aa).

At 1–11 the chain is on the cytoplasmic side; the sequence is MWNNVRQLNLA. The helical transmembrane segment at 12–32 threads the bilayer; the sequence is ASALYALLLLVLAAAGCYWLI. Topologically, residues 33–250 are periplasmic; it reads QRPAFALREI…FLTDTDKGKK (218 aa). In terms of domain architecture, POTRA spans 37–106; sequence FALREIRIDG…NALAVTLEEY (70 aa).

The protein belongs to the FtsQ/DivIB family. FtsQ subfamily. As to quaternary structure, part of a complex composed of FtsB, FtsL and FtsQ.

The protein localises to the cell inner membrane. Essential cell division protein. May link together the upstream cell division proteins, which are predominantly cytoplasmic, with the downstream cell division proteins, which are predominantly periplasmic. May control correct divisome assembly. The protein is Cell division protein FtsQ of Burkholderia pseudomallei (strain K96243).